The following is a 332-amino-acid chain: MQHLFEKLFRAESMSQEESQQLFAAIVRGELDPSQLAAVLISMKVRGETPAEIAGAAQALLADAQHFPRPDYLFADIVGTGGDGTNSINISTASAFVAASCGVKVAKHGNRSVSSRSGSSDLLAAFGIRLDMSAEQSRLALDDLGVCFLFAPQYHTGFRHAMPVRQQLKTRTLFNVLGPLINPARPPLALIGVYSPELVLPIAQTLKVLGYQRAAVVHGGGMDEVAIHAPTQVAELNNGSIESYQLTPEDFGLNRYPLAALQGGMPEENRDILARLLQGKGETAHAAAVAANVALLLKLYGQENLRHNAQQALEMIHSGQAFDRVTALAARG.

5-phospho-alpha-D-ribose 1-diphosphate contacts are provided by residues Gly-79, 82 to 83 (GD), Ser-87, 89 to 92 (NIST), 107 to 115 (KHGNRSVSS), and Ser-119. Residue Gly-79 coordinates anthranilate. Ser-91 is a Mg(2+) binding site. Asn-110 is a binding site for anthranilate. Arg-165 is an anthranilate binding site. Asp-223 and Glu-224 together coordinate Mg(2+).

The protein belongs to the anthranilate phosphoribosyltransferase family. As to quaternary structure, homodimer. Requires Mg(2+) as cofactor.

It carries out the reaction N-(5-phospho-beta-D-ribosyl)anthranilate + diphosphate = 5-phospho-alpha-D-ribose 1-diphosphate + anthranilate. Its pathway is amino-acid biosynthesis; L-tryptophan biosynthesis; L-tryptophan from chorismate: step 2/5. In terms of biological role, catalyzes the transfer of the phosphoribosyl group of 5-phosphorylribose-1-pyrophosphate (PRPP) to anthranilate to yield N-(5'-phosphoribosyl)-anthranilate (PRA). This is Anthranilate phosphoribosyltransferase from Yersinia pseudotuberculosis serotype O:3 (strain YPIII).